The sequence spans 249 residues: Ribonuclease HII (249 aa).

The RNase H type-2 domain occupies 30–221 (GPVAGVDEVG…VRRLVMDGEP (192 aa)). Residues Asp36, Glu37, and Asp130 each coordinate a divalent metal cation.

Belongs to the RNase HII family. Mn(2+) is required as a cofactor. It depends on Mg(2+) as a cofactor.

The protein resides in the cytoplasm. The catalysed reaction is Endonucleolytic cleavage to 5'-phosphomonoester.. In terms of biological role, endonuclease that specifically degrades the RNA of RNA-DNA hybrids. In Mycolicibacterium vanbaalenii (strain DSM 7251 / JCM 13017 / BCRC 16820 / KCTC 9966 / NRRL B-24157 / PYR-1) (Mycobacterium vanbaalenii), this protein is Ribonuclease HII.